The primary structure comprises 288 residues: Acetyl-coenzyme A carboxylase carboxyl transferase subunit beta (288 aa).

Residues 32–288 (LFAKCPACKH…LELHTEVENV (257 aa)) form the CoA carboxyltransferase N-terminal domain. Zn(2+)-binding residues include C36, C39, C54, and C57. A C4-type zinc finger spans residues 36–57 (CPACKHTIYQKDLGKNKVCPNC).

Belongs to the AccD/PCCB family. As to quaternary structure, acetyl-CoA carboxylase is a heterohexamer composed of biotin carboxyl carrier protein (AccB), biotin carboxylase (AccC) and two subunits each of ACCase subunit alpha (AccA) and ACCase subunit beta (AccD). Zn(2+) serves as cofactor.

The protein resides in the cytoplasm. It catalyses the reaction N(6)-carboxybiotinyl-L-lysyl-[protein] + acetyl-CoA = N(6)-biotinyl-L-lysyl-[protein] + malonyl-CoA. It participates in lipid metabolism; malonyl-CoA biosynthesis; malonyl-CoA from acetyl-CoA: step 1/1. In terms of biological role, component of the acetyl coenzyme A carboxylase (ACC) complex. Biotin carboxylase (BC) catalyzes the carboxylation of biotin on its carrier protein (BCCP) and then the CO(2) group is transferred by the transcarboxylase to acetyl-CoA to form malonyl-CoA. This chain is Acetyl-coenzyme A carboxylase carboxyl transferase subunit beta, found in Lactococcus lactis subsp. lactis (strain IL1403) (Streptococcus lactis).